Consider the following 289-residue polypeptide: ATP synthase gamma chain (289 aa).

It belongs to the ATPase gamma chain family. In terms of assembly, F-type ATPases have 2 components, CF(1) - the catalytic core - and CF(0) - the membrane proton channel. CF(1) has five subunits: alpha(3), beta(3), gamma(1), delta(1), epsilon(1). CF(0) has three main subunits: a, b and c.

It localises to the cell membrane. Functionally, produces ATP from ADP in the presence of a proton gradient across the membrane. The gamma chain is believed to be important in regulating ATPase activity and the flow of protons through the CF(0) complex. This chain is ATP synthase gamma chain, found in Lactococcus lactis subsp. cremoris (strain SK11).